A 471-amino-acid polypeptide reads, in one-letter code: Zinc finger protein 385B (471 aa).

The tract at residues 1–93 is required for induction of apoptosis; sequence MNMANFLRGF…TGSTCHTTTL (93 aa). The Matrin-type 1 zinc-finger motif lies at 34-64; sequence SFCEVCNIQLNSAAQAQVHSNGKSHRKRVKQ. Disordered stretches follow at residues 50–92 and 175–275; these read QVHS…HTTT and HYKG…TVVE. A compositionally biased stretch (low complexity) spans 76-92; that stretch reads ASPSSNSSTGSTCHTTT. The segment at 94 to 471 is interaction with p53/TP53; the sequence is PALVRTPTLM…TPASILFAPY (378 aa). A Matrin-type 2 zinc finger spans residues 157 to 187; it reads ISCNVCQLRFNSDSQAEAHYKGSKHAKKVKA. Residues 206 to 220 show a composition bias toward polar residues; the sequence is ANPSCSITPITGNNS. Residues 230 to 250 show a composition bias toward low complexity; sequence KASSSSQPSSSESGSFLLKSG. The span at 260–269 shows a compositional bias: polar residues; sequence TSPSKSTNGA. A Matrin-type 3 zinc finger spans residues 282–316; sequence KKLLYCSLCKVAVNSLSQLEAHNTGSKHKTMVEAR. The segment at 318-340 is disordered; it reads GAGPIKSYPRPGSRLKMQNGSKG. The Matrin-type 4 zinc-finger motif lies at 348–378; sequence FHCEICDVHVNSEIQLKQHISSRRHKDRVAG.

As to quaternary structure, interacts with p53/TP53; the interaction is direct. As to expression, detected in germinal center of lymph node (at protein level). Expressed in spleen, lymph node and tonsil.

The protein localises to the nucleus. May play a role in p53/TP53-mediated apoptosis. In Homo sapiens (Human), this protein is Zinc finger protein 385B (ZNF385B).